The sequence spans 397 residues: Elongation factor Tu (397 aa).

The 198-residue stretch at 10 to 207 (KPHVNVGTIG…TLDTYIPEPV (198 aa)) folds into the tr-type G domain. The G1 stretch occupies residues 19–26 (GHVDHGKT). 19-26 (GHVDHGKT) is a GTP binding site. T26 contacts Mg(2+). Residues 60–64 (GITIN) are G2. The tract at residues 81-84 (DCPG) is G3. GTP-binding positions include 81–85 (DCPGH) and 136–139 (NKAD). Positions 136-139 (NKAD) are G4. Residues 174 to 176 (SAL) form a G5 region.

This sequence belongs to the TRAFAC class translation factor GTPase superfamily. Classic translation factor GTPase family. EF-Tu/EF-1A subfamily. As to quaternary structure, monomer.

It localises to the cytoplasm. The catalysed reaction is GTP + H2O = GDP + phosphate + H(+). Its function is as follows. GTP hydrolase that promotes the GTP-dependent binding of aminoacyl-tRNA to the A-site of ribosomes during protein biosynthesis. This Ectopseudomonas mendocina (strain ymp) (Pseudomonas mendocina) protein is Elongation factor Tu.